The primary structure comprises 476 residues: Glycogen synthase (476 aa).

Lys15 is a binding site for ADP-alpha-D-glucose.

The protein belongs to the glycosyltransferase 1 family. Bacterial/plant glycogen synthase subfamily.

It catalyses the reaction [(1-&gt;4)-alpha-D-glucosyl](n) + ADP-alpha-D-glucose = [(1-&gt;4)-alpha-D-glucosyl](n+1) + ADP + H(+). Its pathway is glycan biosynthesis; glycogen biosynthesis. Its function is as follows. Synthesizes alpha-1,4-glucan chains using ADP-glucose. In Actinobacillus succinogenes (strain ATCC 55618 / DSM 22257 / CCUG 43843 / 130Z), this protein is Glycogen synthase.